We begin with the raw amino-acid sequence, 449 residues long: C4-dicarboxylate transport protein (449 aa).

Helical transmembrane passes span 18 to 38, 61 to 81, 93 to 113, 159 to 179, 202 to 222, 244 to 264, 311 to 331, and 369 to 389; these read PFYLQLYFWVIIAIILGALLG, MIISPVIFLTIVTGIASVAHV, VYFLFFSTLALLLGLVVAHVV, FVGDNILQVLFVAVLFGIALA, LVQMLMKMAPIGAFGAIAFTI, SLLFVLVILGAVSWLCGFSIL, GYSFNLDGTNIYMTLAALFIA, and AATLAVVPEVPIAGMALILGV.

The protein belongs to the dicarboxylate/amino acid:cation symporter (DAACS) (TC 2.A.23) family.

The protein localises to the cell inner membrane. In terms of biological role, responsible for the transport of dicarboxylates such as succinate, fumarate, and malate from the periplasm across the membrane. This Xylella fastidiosa (strain M12) protein is C4-dicarboxylate transport protein.